Here is a 443-residue protein sequence, read N- to C-terminus: ATP-dependent protease ATPase subunit HslU (443 aa).

Residues Ile-18, 60 to 65, Asp-256, Glu-321, and Arg-393 contribute to the ATP site; that span reads GVGKTE.

Belongs to the ClpX chaperone family. HslU subfamily. As to quaternary structure, a double ring-shaped homohexamer of HslV is capped on each side by a ring-shaped HslU homohexamer. The assembly of the HslU/HslV complex is dependent on binding of ATP.

The protein localises to the cytoplasm. ATPase subunit of a proteasome-like degradation complex; this subunit has chaperone activity. The binding of ATP and its subsequent hydrolysis by HslU are essential for unfolding of protein substrates subsequently hydrolyzed by HslV. HslU recognizes the N-terminal part of its protein substrates and unfolds these before they are guided to HslV for hydrolysis. This is ATP-dependent protease ATPase subunit HslU from Photorhabdus laumondii subsp. laumondii (strain DSM 15139 / CIP 105565 / TT01) (Photorhabdus luminescens subsp. laumondii).